A 784-amino-acid chain; its full sequence is LPS-assembly protein LptD (784 aa).

Positions 1-24 (MKKRIPTLLATMIATALYSQQGLA) are cleaved as a signal peptide. Disulfide bonds link C31-C724 and C173-C725.

It belongs to the LptD family. In terms of assembly, component of the lipopolysaccharide transport and assembly complex. Interacts with LptE and LptA. Contains two intramolecular disulfide bonds.

The protein localises to the cell outer membrane. Together with LptE, is involved in the assembly of lipopolysaccharide (LPS) at the surface of the outer membrane. In Escherichia coli O1:K1 / APEC, this protein is LPS-assembly protein LptD.